A 297-amino-acid polypeptide reads, in one-letter code: Protein-methionine-sulfoxide reductase catalytic subunit MsrP (297 aa).

The segment at residues 1–35 is a signal peptide (tat-type signal); the sequence is MLITPEKLYKQRRNFLKLGAGALISSSVLASKLSA. Mo-molybdopterin contacts are provided by residues 62–63, Cys116, Thr151, Asn201, Arg206, and 217–219; these read YE and SIK.

It belongs to the MsrP family. In terms of assembly, heterodimer of a catalytic subunit (MsrP) and a heme-binding subunit (MsrQ). Mo-molybdopterin is required as a cofactor. Predicted to be exported by the Tat system. The position of the signal peptide cleavage has not been experimentally proven.

It is found in the periplasm. The catalysed reaction is L-methionyl-[protein] + a quinone + H2O = L-methionyl-(S)-S-oxide-[protein] + a quinol. It catalyses the reaction L-methionyl-[protein] + a quinone + H2O = L-methionyl-(R)-S-oxide-[protein] + a quinol. In terms of biological role, part of the MsrPQ system that repairs oxidized periplasmic proteins containing methionine sulfoxide residues (Met-O), using respiratory chain electrons. Thus protects these proteins from oxidative-stress damage caused by reactive species of oxygen and chlorine generated by the host defense mechanisms. MsrPQ is essential for the maintenance of envelope integrity under bleach stress, rescuing a wide series of structurally unrelated periplasmic proteins from methionine oxidation. The catalytic subunit MsrP is non-stereospecific, being able to reduce both (R-) and (S-) diastereoisomers of methionine sulfoxide. The sequence is that of Protein-methionine-sulfoxide reductase catalytic subunit MsrP from Campylobacter jejuni subsp. jejuni serotype O:2 (strain ATCC 700819 / NCTC 11168).